Here is a 226-residue protein sequence, read N- to C-terminus: ATP-dependent dethiobiotin synthetase BioD (226 aa).

12–17 (GVGKTV) lines the ATP pocket. Thr16 is a binding site for Mg(2+). Lys37 is a catalytic residue. Thr41 contacts substrate. ATP-binding positions include Asp49, 108 to 111 (EGAG), and 169 to 170 (GS). The Mg(2+) site is built by Asp49 and Glu108.

Belongs to the dethiobiotin synthetase family. As to quaternary structure, homodimer. The cofactor is Mg(2+).

It is found in the cytoplasm. It carries out the reaction (7R,8S)-7,8-diammoniononanoate + CO2 + ATP = (4R,5S)-dethiobiotin + ADP + phosphate + 3 H(+). Its pathway is cofactor biosynthesis; biotin biosynthesis; biotin from 7,8-diaminononanoate: step 1/2. Its function is as follows. Catalyzes a mechanistically unusual reaction, the ATP-dependent insertion of CO2 between the N7 and N8 nitrogen atoms of 7,8-diaminopelargonic acid (DAPA, also called 7,8-diammoniononanoate) to form a ureido ring. The protein is ATP-dependent dethiobiotin synthetase BioD of Mycobacterium marinum (strain ATCC BAA-535 / M).